The primary structure comprises 76 residues: ATP synthase subunit 9, mitochondrial (76 aa).

2 helical membrane passes run 13–35 (GIST…ALIQ) and 50–72 (FAIL…SFLL).

This sequence belongs to the ATPase C chain family. In terms of assembly, F-type ATPases have 2 components, CF(1) - the catalytic core - and CF(0) - the membrane proton channel. In yeast, the dimeric form of ATP synthase consists of 18 polypeptides: alpha, beta, gamma, delta, epsilon, 4 (B), 5 (OSCP), 6 (A), 8, 9 (C), d, E (Tim11), f, g, h, i, j and k.

Its subcellular location is the mitochondrion membrane. Its function is as follows. Mitochondrial membrane ATP synthase (F(1)F(0) ATP synthase or Complex V) produces ATP from ADP in the presence of a proton gradient across the membrane which is generated by electron transport complexes of the respiratory chain. F-type ATPases consist of two structural domains, F(1) - containing the extramembraneous catalytic core and F(0) - containing the membrane proton channel, linked together by a central stalk and a peripheral stalk. During catalysis, ATP synthesis in the catalytic domain of F(1) is coupled via a rotary mechanism of the central stalk subunits to proton translocation. Part of the complex F(0) domain. A homomeric c-ring of probably 10 subunits is part of the complex rotary element. The sequence is that of ATP synthase subunit 9, mitochondrial (ATP9) from Eremothecium gossypii (strain ATCC 10895 / CBS 109.51 / FGSC 9923 / NRRL Y-1056) (Yeast).